Consider the following 43-residue polypeptide: Protein PsbN (43 aa).

Residues alanine 4 to tyrosine 24 traverse the membrane as a helical segment.

It belongs to the PsbN family.

Its subcellular location is the plastid. It is found in the chloroplast thylakoid membrane. Its function is as follows. May play a role in photosystem I and II biogenesis. The chain is Protein PsbN from Thalassiosira pseudonana (Marine diatom).